The primary structure comprises 134 residues: Small ribosomal subunit protein bS16 (134 aa).

Residues 79 to 134 (AGIAKRPSRNNPTKGEPGKKAQERLALAKQAEEEAAAKAAEAAAAAAAPAEEAASE) are disordered. Residues 115 to 134 (AKAAEAAAAAAAPAEEAASE) show a composition bias toward low complexity.

This sequence belongs to the bacterial ribosomal protein bS16 family.

The protein is Small ribosomal subunit protein bS16 of Brucella canis (strain ATCC 23365 / NCTC 10854 / RM-666).